Here is a 373-residue protein sequence, read N- to C-terminus: Cell division protein FtsZ 1 (373 aa).

GTP is bound by residues 51–55 (GAGCN), 138–140 (GTG), E169, R173, and D216. The interval 354–373 (EESYFGEEERRPIKLDLDEL) is disordered. A compositionally biased stretch (basic and acidic residues) spans 360–373 (EEERRPIKLDLDEL).

This sequence belongs to the FtsZ family. In terms of assembly, homodimer. Polymerizes to form a dynamic ring structure in a strictly GTP-dependent manner. Interacts directly with several other division proteins.

Its subcellular location is the cytoplasm. In terms of biological role, essential cell division protein that forms a contractile ring structure (Z ring) at the future cell division site. The regulation of the ring assembly controls the timing and the location of cell division. One of the functions of the FtsZ ring is to recruit other cell division proteins to the septum to produce a new cell wall between the dividing cells. Binds GTP and shows GTPase activity. In Thermococcus kodakarensis (strain ATCC BAA-918 / JCM 12380 / KOD1) (Pyrococcus kodakaraensis (strain KOD1)), this protein is Cell division protein FtsZ 1.